We begin with the raw amino-acid sequence, 157 residues long: 2-C-methyl-D-erythritol 2,4-cyclodiphosphate synthase (157 aa).

A divalent metal cation is bound by residues Asp9 and His11. Residues 9–11 (DVH) and 35–36 (HS) each bind 4-CDP-2-C-methyl-D-erythritol 2-phosphate. His43 serves as a coordination point for a divalent metal cation. Residues 57-59 (DIG), Phe140, and Arg143 contribute to the 4-CDP-2-C-methyl-D-erythritol 2-phosphate site.

This sequence belongs to the IspF family. In terms of assembly, homotrimer. The cofactor is a divalent metal cation.

The catalysed reaction is 4-CDP-2-C-methyl-D-erythritol 2-phosphate = 2-C-methyl-D-erythritol 2,4-cyclic diphosphate + CMP. The protein operates within isoprenoid biosynthesis; isopentenyl diphosphate biosynthesis via DXP pathway; isopentenyl diphosphate from 1-deoxy-D-xylulose 5-phosphate: step 4/6. Functionally, involved in the biosynthesis of isopentenyl diphosphate (IPP) and dimethylallyl diphosphate (DMAPP), two major building blocks of isoprenoid compounds. Catalyzes the conversion of 4-diphosphocytidyl-2-C-methyl-D-erythritol 2-phosphate (CDP-ME2P) to 2-C-methyl-D-erythritol 2,4-cyclodiphosphate (ME-CPP) with a corresponding release of cytidine 5-monophosphate (CMP). The protein is 2-C-methyl-D-erythritol 2,4-cyclodiphosphate synthase of Caldicellulosiruptor bescii (strain ATCC BAA-1888 / DSM 6725 / KCTC 15123 / Z-1320) (Anaerocellum thermophilum).